The sequence spans 510 residues: UDP-N-acetylmuramate--L-alanine ligase (510 aa).

Positions 1–25 are disordered; sequence MVETVGGKDAVAPAPARSPSPPAKN. 140–146 contributes to the ATP binding site; that stretch reads GTHGKTT.

It belongs to the MurCDEF family.

The protein localises to the cytoplasm. The enzyme catalyses UDP-N-acetyl-alpha-D-muramate + L-alanine + ATP = UDP-N-acetyl-alpha-D-muramoyl-L-alanine + ADP + phosphate + H(+). It participates in cell wall biogenesis; peptidoglycan biosynthesis. Cell wall formation. This chain is UDP-N-acetylmuramate--L-alanine ligase, found in Synechococcus sp. (strain JA-3-3Ab) (Cyanobacteria bacterium Yellowstone A-Prime).